We begin with the raw amino-acid sequence, 103 residues long: Large ribosomal subunit protein bL21 (103 aa).

It belongs to the bacterial ribosomal protein bL21 family. As to quaternary structure, part of the 50S ribosomal subunit. Contacts protein L20.

Its function is as follows. This protein binds to 23S rRNA in the presence of protein L20. In Mycobacteroides abscessus (strain ATCC 19977 / DSM 44196 / CCUG 20993 / CIP 104536 / JCM 13569 / NCTC 13031 / TMC 1543 / L948) (Mycobacterium abscessus), this protein is Large ribosomal subunit protein bL21.